We begin with the raw amino-acid sequence, 395 residues long: Zinc finger protein 385D (395 aa).

The Matrin-type 1 zinc-finger motif lies at 80–110; the sequence is ISCNICQLRFNSDSQAAAHYKGTKHAKKLKA. The segment covering 169–193 has biased composition (polar residues); the sequence is MTTEITSKVEKSPTTATGNSSCPST. Residues 169–194 form a disordered region; that stretch reads MTTEITSKVEKSPTTATGNSSCPSTE. 2 consecutive Matrin-type zinc fingers follow at residues 204–234 and 267–297; these read LYCS…MLEA and FHCE…RAAG. The interval 282–309 is disordered; sequence LKQHISSRRHKDRAAGKPPKPKYSPYNK.

The protein resides in the nucleus. The chain is Zinc finger protein 385D (ZNF385D) from Homo sapiens (Human).